A 31-amino-acid polypeptide reads, in one-letter code: Photosystem II reaction center protein M (31 aa).

The helical transmembrane segment at 5-25 (ILALMATALFIIIPTAFLIIL) threads the bilayer.

It belongs to the PsbM family. In terms of assembly, PSII is composed of 1 copy each of membrane proteins PsbA, PsbB, PsbC, PsbD, PsbE, PsbF, PsbH, PsbI, PsbJ, PsbK, PsbL, PsbM, PsbT, PsbX, PsbY, PsbZ, Psb30/Ycf12, at least 3 peripheral proteins of the oxygen-evolving complex and a large number of cofactors. It forms dimeric complexes.

It localises to the plastid. Its subcellular location is the chloroplast thylakoid membrane. Its function is as follows. One of the components of the core complex of photosystem II (PSII). PSII is a light-driven water:plastoquinone oxidoreductase that uses light energy to abstract electrons from H(2)O, generating O(2) and a proton gradient subsequently used for ATP formation. It consists of a core antenna complex that captures photons, and an electron transfer chain that converts photonic excitation into a charge separation. This subunit is found at the monomer-monomer interface. The chain is Photosystem II reaction center protein M from Mesostigma viride (Green alga).